The sequence spans 222 residues: 2-C-methyl-D-erythritol 4-phosphate cytidylyltransferase (222 aa).

It belongs to the IspD/TarI cytidylyltransferase family. IspD subfamily.

It carries out the reaction 2-C-methyl-D-erythritol 4-phosphate + CTP + H(+) = 4-CDP-2-C-methyl-D-erythritol + diphosphate. Its pathway is isoprenoid biosynthesis; isopentenyl diphosphate biosynthesis via DXP pathway; isopentenyl diphosphate from 1-deoxy-D-xylulose 5-phosphate: step 2/6. Its function is as follows. Catalyzes the formation of 4-diphosphocytidyl-2-C-methyl-D-erythritol from CTP and 2-C-methyl-D-erythritol 4-phosphate (MEP). This chain is 2-C-methyl-D-erythritol 4-phosphate cytidylyltransferase, found in Thermotoga sp. (strain RQ2).